The chain runs to 223 residues: Glutathione S-transferase A1 (223 aa).

Position 1 is an N-acetylmethionine (Met1). Ala2 is modified (N-acetylalanine; in Glutathione S-transferase A1, N-terminally processed). The 81-residue stretch at 3 to 83 (GKPVLHYFNA…YIATKYDLYG (81 aa)) folds into the GST N-terminal domain. An N6-succinyllysine modification is found at Lys4. Glutathione is bound by residues Tyr9, Lys45, 54–55 (QV), and 67–68 (QT). Residues 85 to 208 (DMKERALIDM…QPGSQRKPPM (124 aa)) enclose the GST C-terminal domain.

Belongs to the GST superfamily. Alpha family. In terms of assembly, homodimer. As to expression, expressed in the liver, skin and kidney.

The catalysed reaction is RX + glutathione = an S-substituted glutathione + a halide anion + H(+). It catalyses the reaction prostaglandin A2 + glutathione = prostaglandin A2-S-(R)-glutathione. It carries out the reaction prostaglandin J2 + glutathione = prostaglandin J2-S-(R)-glutathione. The enzyme catalyses (13S)-hydroperoxy-(9Z,11E)-octadecadienoate + 2 glutathione = (13S)-hydroxy-(9Z,11E)-octadecadienoate + glutathione disulfide + H2O. The catalysed reaction is androst-5-ene-3,17-dione = androst-4-ene-3,17-dione. Functionally, glutathione S-transferase that catalyzes the nucleophilic attack of the sulfur atom of glutathione on the electrophilic groups of a wide range of exogenous and endogenous compounds. Involved in the formation of glutathione conjugates of both prostaglandin A2 (PGA2) and prostaglandin J2 (PGJ2). It also catalyzes the isomerization of D5-androstene-3,17-dione (AD) into D4-androstene-3,17-dione and may therefore play an important role in hormone biosynthesis. Through its glutathione-dependent peroxidase activity toward the fatty acid hydroperoxide (13S)-hydroperoxy-(9Z,11E)-octadecadienoate/13-HPODE it is also involved in the metabolism of oxidized linoleic acid. The polypeptide is Glutathione S-transferase A1 (Gsta1) (Mus musculus (Mouse)).